A 306-amino-acid polypeptide reads, in one-letter code: Manganese transport system membrane protein MntB (306 aa).

Residues 1-25 (MNQLVVAFPFWHWLVEPLQYEFLIR) are Periplasmic-facing. The helical transmembrane segment at 26–46 (AIWVSAFVGLVCAVLSCYITL) threads the bilayer. Over 47 to 48 (KG) the chain is Cytoplasmic. The helical transmembrane segment at 49 to 69 (WSLMGDAISHAVVPGVVLAYA) threads the bilayer. At 70–71 (LN) the chain is on the periplasmic side. A helical transmembrane segment spans residues 72-92 (IPFAIGAFTFGFGATVAIGYV). Residues 93-101 (KSKTRLKED) are Cytoplasmic-facing. A helical transmembrane segment spans residues 102 to 122 (AVIGIVFTGFFALGLVLVTKI). Residues 123-141 (PSNVDLFHILFGNVLGISQ) are Periplasmic-facing. A helical membrane pass occupies residues 142–162 (QDIIQTLIAGSITLIVILLRR). Over 163-179 (KDLLLFCFDPNHAKAIG) the chain is Cytoplasmic. A helical membrane pass occupies residues 180-200 (LRTQVMYYTLLSVLALTIVAA). Topologically, residues 201–202 (LQ) are periplasmic. The chain crosses the membrane as a helical span at residues 203-223 (TAGIILVISMLVTPGSIGYLL). Over 224–228 (SDRFD) the chain is Cytoplasmic. Residues 229–249 (HMLWYSVVSSVLSCVLGTYLS) form a helical membrane-spanning segment. Residues 250 to 255 (YHFDVS) are Periplasmic-facing. The chain crosses the membrane as a helical span at residues 256 to 276 (TGGMIVVILTTLFVIAMIGAP). At 277-306 (KYGILAQEWRKRSGPNPEDDENQTVVVDQV) the chain is on the cytoplasmic side.

It belongs to the ABC-3 integral membrane protein family.

It is found in the cell membrane. Functionally, part of an ATP-driven transport system for manganese. The sequence is that of Manganese transport system membrane protein MntB (mntB) from Synechocystis sp. (strain ATCC 27184 / PCC 6803 / Kazusa).